Here is a 455-residue protein sequence, read N- to C-terminus: Argininosuccinate lyase (455 aa).

It belongs to the lyase 1 family. Argininosuccinate lyase subfamily.

Its subcellular location is the cytoplasm. The enzyme catalyses 2-(N(omega)-L-arginino)succinate = fumarate + L-arginine. It participates in amino-acid biosynthesis; L-arginine biosynthesis; L-arginine from L-ornithine and carbamoyl phosphate: step 3/3. The polypeptide is Argininosuccinate lyase (Shewanella halifaxensis (strain HAW-EB4)).